We begin with the raw amino-acid sequence, 417 residues long: UDP-N-acetylglucosamine 1-carboxyvinyltransferase (417 aa).

Residue 22 to 23 (KN) participates in phosphoenolpyruvate binding. UDP-N-acetyl-alpha-D-glucosamine is bound at residue arginine 92. The active-site Proton donor is cysteine 116. 2-(S-cysteinyl)pyruvic acid O-phosphothioketal is present on cysteine 116. 2 residues coordinate UDP-N-acetyl-alpha-D-glucosamine: aspartate 304 and valine 326.

It belongs to the EPSP synthase family. MurA subfamily.

It is found in the cytoplasm. The enzyme catalyses phosphoenolpyruvate + UDP-N-acetyl-alpha-D-glucosamine = UDP-N-acetyl-3-O-(1-carboxyvinyl)-alpha-D-glucosamine + phosphate. Its pathway is cell wall biogenesis; peptidoglycan biosynthesis. Functionally, cell wall formation. Adds enolpyruvyl to UDP-N-acetylglucosamine. In Syntrophotalea carbinolica (strain DSM 2380 / NBRC 103641 / GraBd1) (Pelobacter carbinolicus), this protein is UDP-N-acetylglucosamine 1-carboxyvinyltransferase.